Consider the following 106-residue polypeptide: Large ribosomal subunit protein uL24 (106 aa).

This sequence belongs to the universal ribosomal protein uL24 family. As to quaternary structure, part of the 50S ribosomal subunit.

One of two assembly initiator proteins, it binds directly to the 5'-end of the 23S rRNA, where it nucleates assembly of the 50S subunit. Its function is as follows. One of the proteins that surrounds the polypeptide exit tunnel on the outside of the subunit. This Verminephrobacter eiseniae (strain EF01-2) protein is Large ribosomal subunit protein uL24.